The sequence spans 344 residues: Transcription factor HRS1 (344 aa).

The disordered stretch occupies residues 88-184 (IKDSSTSNEE…DGGGGRKQRR (97 aa)). The span at 95–104 (NEEEDEEFDD) shows a compositional bias: acidic residues. Composition is skewed to basic and acidic residues over residues 105-124 (EHGNHDPDNDSEDKNTKSDW) and 138-178 (LLPK…DGGG). Residues 178–238 (GGRKQRRCWS…HLQKYRLHTR (61 aa)) form the HTH myb-type domain. A DNA-binding region (H-T-H motif) is located at residues 209–234 (PKQIREFMKVDGLTNDEVKSHLQKYR). Residues 269–291 (STGKTTGGATTSSTTTTTGIYGT) are compositionally biased toward low complexity. Residues 269-322 (STGKTTGGATTSSTTTTTGIYGTMAAPPPPQWPSHSNYRPSIIVDEGSGSHSEG) are disordered.

As to expression, expressed in the root hair region and root hair cells.

It is found in the nucleus. Transcription factor involved in nitrate and phosphate signaling in roots. Integrates nitrate and phosphate starvation responses and adaptation of root architecture depending on nutrient availabilities. Acts downstream of the nitrate sensor and transporter NPF6.3/NRT1.1. Represses primary root development in response to phosphate deficiency conditions, only when nitrate is present. Involved in the modulation of primary root and root hair growth in phosphate-deprived environment. May be required for suppressing abscisic acid (ABA) signaling in germinating embryo axis, which promotes the timely germination of seeds. This Arabidopsis thaliana (Mouse-ear cress) protein is Transcription factor HRS1.